Reading from the N-terminus, the 260-residue chain is Activator of 90 kDa heat shock protein ATPase homolog 2 (260 aa).

The protein belongs to the AHA1 family.

Co-chaperone that stimulates HSP90 ATPase activity. The protein is Activator of 90 kDa heat shock protein ATPase homolog 2 (AHSA2) of Bos taurus (Bovine).